The primary structure comprises 435 residues: Protoheme IX farnesyltransferase, mitochondrial (435 aa).

Residues 1–35 (MPALCATYLIHSGNLRACLRIVPLTKPSVVIAYRH) constitute a mitochondrion transit peptide. Transmembrane regions (helical) follow at residues 135-155 (VLVMLSAICSYALSPYPATVL), 157-177 (LLSLTVGTTLCSAAANGINMG), 212-232 (GVIGTAILYAGVNPTVALLGA), 250-270 (IINTWFGAITGAIPPLMGWAA), 324-344 (VALRYSLLMFPLCFGLSYYGI), and 401-421 (FWVSVLHLPAVLILAIVHKKG).

It belongs to the UbiA prenyltransferase family.

The protein localises to the mitochondrion membrane. Functionally, converts protoheme IX and farnesyl diphosphate to heme O. The chain is Protoheme IX farnesyltransferase, mitochondrial (COX10) from Eremothecium gossypii (strain ATCC 10895 / CBS 109.51 / FGSC 9923 / NRRL Y-1056) (Yeast).